Reading from the N-terminus, the 102-residue chain is Defensin-like protein 285 (102 aa).

The N-terminal stretch at 1–28 (MTNLYFKTAFLLSLLLLSFSYQSKLIEA) is a signal peptide. Disulfide bonds link C39/C100, C64/C83, C70/C88, and C75/C90.

This sequence belongs to the DEFL family.

Its subcellular location is the secreted. The polypeptide is Defensin-like protein 285 (Arabidopsis thaliana (Mouse-ear cress)).